We begin with the raw amino-acid sequence, 66 residues long: UPF0337 protein SpyM3_0896 (66 aa).

It belongs to the UPF0337 (CsbD) family.

The polypeptide is UPF0337 protein SpyM3_0896 (Streptococcus pyogenes serotype M3 (strain ATCC BAA-595 / MGAS315)).